The primary structure comprises 211 residues: SOSS complex subunit B2 (211 aa).

A DNA-binding region (OB) is located at residues 27–97 (IVLEIGRVTK…TLYTGRGGDL (71 aa)). Residues 125 to 211 (NQQNKTSKEQ…GRDPRRASKR (87 aa)) are disordered. A compositionally biased stretch (polar residues) spans 136 to 157 (GNSPPNQNAGNGTVPVFSNNNA). A compositionally biased stretch (pro residues) spans 179 to 195 (NGPPPVTAGGTPAPPKP).

Belongs to the SOSS-B family. SOSS-B2 subfamily. Component of the SOSS complex, composed of soss-b (soss-b1/nabp2 or soss-b2/nabp1), soss-a/ints3 and soss-c/inip. SOSS complexes containing soss-b1/nabp2 are more abundant than complexes containing soss-b2/nabp1.

Its subcellular location is the nucleus. Component of the SOSS complex, a multiprotein complex that functions downstream of the MRN complex to promote DNA repair and G2/M checkpoint. In the SOSS complex, acts as a sensor of single-stranded DNA that binds to single-stranded DNA. The SOSS complex associates with DNA lesions and influences diverse endpoints in the cellular DNA damage response including cell-cycle checkpoint activation, recombinational repair and maintenance of genomic stability. Required for efficient homologous recombination-dependent repair of double-strand breaks (DSBs). This Danio rerio (Zebrafish) protein is SOSS complex subunit B2 (nabp1).